The sequence spans 221 residues: UPF0758 protein YicR (221 aa).

The MPN domain occupies 99–221 (ALLSPEMTRE…YVSFAERGWI (123 aa)). His-170, His-172, and Asp-183 together coordinate Zn(2+). The JAMM motif motif lies at 170 to 183 (HNHPSGCAEPSKAD).

Belongs to the UPF0758 family. YicR subfamily.

The sequence is that of UPF0758 protein YicR from Salmonella agona (strain SL483).